The following is a 297-amino-acid chain: Bifunctional protein FolD (297 aa).

NADP(+) contacts are provided by residues 164-166 (GRS), S193, and I234.

It belongs to the tetrahydrofolate dehydrogenase/cyclohydrolase family. Homodimer.

The catalysed reaction is (6R)-5,10-methylene-5,6,7,8-tetrahydrofolate + NADP(+) = (6R)-5,10-methenyltetrahydrofolate + NADPH. It catalyses the reaction (6R)-5,10-methenyltetrahydrofolate + H2O = (6R)-10-formyltetrahydrofolate + H(+). Its pathway is one-carbon metabolism; tetrahydrofolate interconversion. In terms of biological role, catalyzes the oxidation of 5,10-methylenetetrahydrofolate to 5,10-methenyltetrahydrofolate and then the hydrolysis of 5,10-methenyltetrahydrofolate to 10-formyltetrahydrofolate. The polypeptide is Bifunctional protein FolD (Halobacterium salinarum (strain ATCC 700922 / JCM 11081 / NRC-1) (Halobacterium halobium)).